Consider the following 110-residue polypeptide: uncharacterized protein (110 aa).

A signal peptide spans 1–16 (MKKILLIASMTAGLTA). The N-palmitoyl cysteine moiety is linked to residue Cys-17. Cys-17 carries the S-diacylglycerol cysteine lipid modification.

It localises to the cell membrane. This is an uncharacterized protein from Salmonella typhimurium (strain LT2 / SGSC1412 / ATCC 700720).